A 735-amino-acid polypeptide reads, in one-letter code: Serine/threonine-protein kinase BRSK2 (735 aa).

In terms of domain architecture, Protein kinase spans 20–271 (YRLEKTLGKG…LEHIQKHIWY (252 aa)). ATP is bound by residues 26–34 (LGKGQTGLV) and K49. Residue D142 is the Proton acceptor of the active site. T175 bears the Phosphothreonine; by LKB1 mark. T261 is modified (phosphothreonine; by PKA). Residue S295 is modified to Phosphoserine. The 43-residue stretch at 298 to 340 (DIDPDVLDSMHSLGCFRDRNKLLQDLLSEEENQEKMIYFLLLD) folds into the UBA domain. The span at 346–367 (PSHEDEDLPPRNEIDPPRKRVD) shows a compositional bias: basic and acidic residues. Disordered regions lie at residues 346 to 476 (PSHE…GVPW), 493 to 514 (FHRR…PESS), and 682 to 735 (KNGQ…REQP). Phosphoserine is present on residues S368, S383, S394, S413, A417, S424, and S428. Low complexity predominate over residues 411 to 429 (SRSISGASSGLSTSPLSSP). Over residues 432–446 (TPHPSPRGSPLPTPK) the composition is skewed to pro residues. At S456 the chain carries Phosphoserine. A phosphothreonine mark is found at T460, T464, and T510. Phosphoserine occurs at positions 513 and 514.

The protein belongs to the protein kinase superfamily. CAMK Ser/Thr protein kinase family. SNF1 subfamily. In terms of assembly, interacts with FZR1, a regulatory subunit of the APC ubiquitin ligase complex. Interacts with COPS5. Interacts with PAK1. Mg(2+) serves as cofactor. Post-translationally, may be phosphorylated at Thr-261 by PKA. Phosphorylated at Thr-175 by STK11/LKB1 in complex with STE20-related adapter-alpha (STRADA) pseudo kinase and CAB39. Not phosphorylated at Thr-175 by CaMKK2. In contrast, it is phosphorylated and activated by CaMKK1. May be inactivated via dephosphorylation of Thr-175 by PP2C. Polyubiquitinated by the APC complex in conjunction with FZR1, leading to its proteasomal degradation. Targeted for proteasomal degradation by interaction with COPS5. BRSK2 levels change during the cell cycle. BRSK2 levels are low at the G1/S boundary and gradually increase as cells progress into G2 phase. BRSK2 levels decrease rapidly at the end of mitosis.

The protein localises to the cytoplasm. It is found in the cytoskeleton. Its subcellular location is the microtubule organizing center. It localises to the centrosome. The protein resides in the perinuclear region. The protein localises to the endoplasmic reticulum. The enzyme catalyses L-seryl-[protein] + ATP = O-phospho-L-seryl-[protein] + ADP + H(+). The catalysed reaction is L-threonyl-[protein] + ATP = O-phospho-L-threonyl-[protein] + ADP + H(+). It carries out the reaction L-seryl-[tau protein] + ATP = O-phospho-L-seryl-[tau protein] + ADP + H(+). It catalyses the reaction L-threonyl-[tau protein] + ATP = O-phospho-L-threonyl-[tau protein] + ADP + H(+). Activated by phosphorylation on Thr-175 by STK11/LKB1. Serine/threonine-protein kinase that plays a key role in polarization of neurons and axonogenesis, cell cycle progress and insulin secretion. Phosphorylates CDK16, CDC25C, MAPT/TAU, PAK1 and WEE1. Following phosphorylation and activation by STK11/LKB1, acts as a key regulator of polarization of cortical neurons, probably by mediating phosphorylation of microtubule-associated proteins such as MAPT/TAU at 'Thr-523' and 'Ser-573'. Also regulates neuron polarization by mediating phosphorylation of WEE1 at 'Ser-642' in post-mitotic neurons, leading to down-regulate WEE1 activity in polarized neurons. Plays a role in the regulation of the mitotic cell cycle progress and the onset of mitosis. Plays a role in the regulation of insulin secretion in response to elevated glucose levels, probably via phosphorylation of CDK16 and PAK1. While BRSK2 phosphorylated at Thr-175 can inhibit insulin secretion, BRSK2 phosphorylated at Thr-261 can promote insulin secretion. Regulates reorganization of the actin cytoskeleton. May play a role in the apoptotic response triggered by endoplasmic reticulum (ER) stress. This Rattus norvegicus (Rat) protein is Serine/threonine-protein kinase BRSK2 (Brsk2).